A 312-amino-acid polypeptide reads, in one-letter code: Ribosomal protein L11 methyltransferase (312 aa).

4 residues coordinate S-adenosyl-L-methionine: T163, G184, D206, and N248.

Belongs to the methyltransferase superfamily. PrmA family.

The protein resides in the cytoplasm. It carries out the reaction L-lysyl-[protein] + 3 S-adenosyl-L-methionine = N(6),N(6),N(6)-trimethyl-L-lysyl-[protein] + 3 S-adenosyl-L-homocysteine + 3 H(+). Its function is as follows. Methylates ribosomal protein L11. In Clostridium botulinum (strain Loch Maree / Type A3), this protein is Ribosomal protein L11 methyltransferase.